Here is an 802-residue protein sequence, read N- to C-terminus: MSFNHQTIEKKWQKYWLDNHTFKTTEDKDKNFYALDMFPYPSGAGLHVGHPEGYTATDIISRFKRMQGYNVLHPMGWDAFGLPAEQYAIDTGNDPAEFTEKNIATFKRQIQELGFSYDWEREINTTDPEYYKWTQWIFIQLYKKGLAYVDEVAVNWCPALGTVLSNEEVIDGVSERGGHPVIRKPMRQWVLKITEYADRLLEDLEELDWPESLKDMQRNWIGRSEGAEVAFEVENLDHSFKVFTTRPDTIYGATYAVLSPEHELVAAITSEEQAEAVKAYQEQAARKSDLERTDLAKDKTGVFTGSYAINPFNGERMPIWISDYVLASYGTGAIMAVPAHDERDFEFAKQFGLDIKPVIEGGDNTSAYTGDGAHINSGELDGLNKEEGIRRAIELLEAKGIGEKKVSYKLRDWLFSRQRYWGEPIPVITWEDGSMTTVPEEELPLMLPKTEHIKPSGTGESPLANIDEFVNVTDPVTGMKGRRETNTMPQWAGSCWYYLRYIDPKNSDMIADPELLKKWLPVDLYIGGAEHAVLHLLYARFWHKVLYDLGVVHTKEPFQKLFNQGMILGEGNEKMSKSKGNVVNPDDVVASHGADTLRLYEMFMGPLDASIAWSTNGLDGARRFLDRVYRLLVNEDGTLSEKITEQPVGSMEKVYHQTVKKVTDDYETLGFNTAISQMMVFINEGYKSEQLNIDHIRGFVKLLNPIAPHITEELWEKLGGTESITYEAWPVYDESKLVDSEVEIVIQVNGKLKQKATIAKDMDKSEMETFALSLEAVQTAIEGKTVRKVIAVPNKLVNIVAN.

Residues P39 to H50 carry the 'HIGH' region motif. Positions K574 to S578 match the 'KMSKS' region motif. K577 is an ATP binding site.

Belongs to the class-I aminoacyl-tRNA synthetase family.

The protein resides in the cytoplasm. It carries out the reaction tRNA(Leu) + L-leucine + ATP = L-leucyl-tRNA(Leu) + AMP + diphosphate. This Macrococcus caseolyticus (strain JCSC5402) (Macrococcoides caseolyticum) protein is Leucine--tRNA ligase.